The primary structure comprises 156 residues: Small ribosomal subunit protein uS7 (156 aa).

This sequence belongs to the universal ribosomal protein uS7 family. As to quaternary structure, part of the 30S ribosomal subunit. Contacts proteins S9 and S11.

Functionally, one of the primary rRNA binding proteins, it binds directly to 16S rRNA where it nucleates assembly of the head domain of the 30S subunit. Is located at the subunit interface close to the decoding center, probably blocks exit of the E-site tRNA. The sequence is that of Small ribosomal subunit protein uS7 from Thiobacillus denitrificans (strain ATCC 25259 / T1).